We begin with the raw amino-acid sequence, 519 residues long: LysM domain-containing protein ARB_03442 (519 aa).

The N-terminal stretch at 1–19 (MGQLKQLAGILALASPAIA) is a signal peptide. Asn47 is a glycosylation site (N-linked (GlcNAc...) asparagine). Residues 312 to 358 (KYYNVVAGDTCASISSEFEVTMDELLTYNPELHPNCENLWANFAICV) form the LysM domain. The segment at 314–358 (YNVVAGDTCASISSEFEVTMDELLTYNPELHPNCENLWANFAICV) is lysM domain. Residues 407-416 (PDAPDAQGQT) show a composition bias toward low complexity. The disordered stretch occupies residues 407 to 458 (PDAPDAQGQTVHDDEPPEEPHIEEPPKDIPAGDDDDRKKAKLPLPSGKYPLP). The segment covering 417-433 (VHDDEPPEEPHIEEPPK) has biased composition (basic and acidic residues). Asn460 carries an N-linked (GlcNAc...) asparagine glycan. In terms of domain architecture, Chitin-binding type-1 spans 467–510 (DGSCNEYISCVGSPFGVCCSTSGWCGYGKPWCGVGNCVSGYCDT). Disulfide bonds link Cys470–Cys485, Cys476–Cys491, Cys484–Cys498, and Cys503–Cys508.

The protein resides in the secreted. Might have a role in sequestration of chitin oligosaccharides (breakdown products of fungal cell walls that are released during invasion and act as triggers of host immunity) to dampen host defense. The chain is LysM domain-containing protein ARB_03442 from Arthroderma benhamiae (strain ATCC MYA-4681 / CBS 112371) (Trichophyton mentagrophytes).